The following is a 302-amino-acid chain: Snake venom metalloprotease inhibitor 02A10 (302 aa).

Positions methionine 1–glycine 23 are cleaved as a signal peptide. Residues lysine 24–glutamine 47 constitute a propeptide that is removed on maturation. Residues tryptophan 32–histidine 302 form a disordered region. Residues leucine 33–proline 44 are compositionally biased toward pro residues. The residue at position 48 (glutamine 48) is a Pyrrolidone carboxylic acid. The propeptide occupies leucine 51–glutamine 58. Pyrrolidone carboxylic acid is present on glutamine 59. Positions leucine 62–glutamine 69 are excised as a propeptide. Residue glutamine 70 is modified to Pyrrolidone carboxylic acid. A propeptide spanning residues leucine 73–glutamine 80 is cleaved from the precursor. Pyrrolidone carboxylic acid is present on glutamine 81. The propeptide occupies leucine 84 to glutamine 91. A Pyrrolidone carboxylic acid modification is found at glutamine 92. The propeptide occupies leucine 95–glutamine 102. The residue at position 103 (glutamine 103) is a Pyrrolidone carboxylic acid. The propeptide occupies leucine 106–glutamine 113. Position 114 is a pyrrolidone carboxylic acid (glutamine 114). The propeptide occupies leucine 117–glutamine 124. At glutamine 125 the chain carries Pyrrolidone carboxylic acid. Residues leucine 128–glutamine 135 constitute a propeptide that is removed on maturation. At glutamine 136 the chain carries Pyrrolidone carboxylic acid. Positions leucine 139–glutamine 146 are excised as a propeptide. Pyrrolidone carboxylic acid is present on glutamine 147. Residues leucine 150–glutamine 157 constitute a propeptide that is removed on maturation. Glutamine 158 carries the pyrrolidone carboxylic acid modification. Residues leucine 161–glutamine 168 constitute a propeptide that is removed on maturation. Glutamine 169 is modified (pyrrolidone carboxylic acid). A propeptide spanning residues leucine 172–glutamine 179 is cleaved from the precursor. Glutamine 180 is modified (pyrrolidone carboxylic acid). Positions leucine 183–glutamine 190 are excised as a propeptide. Glutamine 191 bears the Pyrrolidone carboxylic acid mark. Residues leucine 194–glutamine 201 constitute a propeptide that is removed on maturation. Glutamine 202 bears the Pyrrolidone carboxylic acid mark. The propeptide occupies leucine 205–glutamine 212. Position 213 is a pyrrolidone carboxylic acid (glutamine 213). The propeptide occupies leucine 216–glutamine 223. Residue glutamine 224 is modified to Pyrrolidone carboxylic acid. The propeptide occupies glutamine 227 to lysine 273. Basic and acidic residues-rich tracts occupy residues leucine 240 to glutamate 255 and glutamate 262 to lysine 273. Cysteine 279 and cysteine 293 form a disulfide bridge. Positions proline 294–histidine 302 are excised as a propeptide.

The protein in the C-terminal section; belongs to the natriuretic peptide family. As to expression, expressed by the venom gland.

Its subcellular location is the secreted. PEKW peptides may serve as metalloproteinase inhibitors during glandular storage. Their inhibition may be instantly disengaged, by dilution or physiochemical change, when venom is injected into tissue of the victim. Functionally, exhibits hypotensive and vasodepressor activity. Acts by activating natriuretic receptors (NPR1 and/or NPR2 and/or NPR3). The sequence is that of Snake venom metalloprotease inhibitor 02A10 (Svmpi-Cce12) from Cerastes cerastes (Horned desert viper).